We begin with the raw amino-acid sequence, 264 residues long: Neurexophilin-2 (264 aa).

An N-terminal signal peptide occupies residues 1-22 (MRLRPLPLVVVPGLLQLLFCDS). Residues 23–90 (EKVVHATEGL…WDWLANITEV (68 aa)) are II. N-linked (GlcNAc...) asparagine glycans are attached at residues asparagine 86, asparagine 139, asparagine 149, and asparagine 155. The tract at residues 91–169 (QEPLARTKRR…LVPPSKVVEF (79 aa)) is III. Residues 170–178 (EVSPQSTLE) form an IV (linker domain) region. The tract at residues 179–264 (TKESKSFNCR…HSETPYLSSG (86 aa)) is v (Cys-rich).

It belongs to the neurexophilin family. Post-translationally, may be proteolytically processed at the boundary between the N-terminal non-conserved and the central conserved domain in neuron-like cells. Brain, only in a scattered subpopulation of neurons that probably represent inhibitory interneurons.

The protein localises to the secreted. May be signaling molecules that resemble neuropeptides and that act by binding to alpha-neurexins and possibly other receptors. The sequence is that of Neurexophilin-2 (NXPH2) from Bos taurus (Bovine).